Consider the following 434-residue polypeptide: MMNTRVWCKIIGMLALLVWLVSSPSVFAVLTIEITGGTEAALPIAIVPFQNEGSTPPENVAAVIAADLARSGRFAPLPEEDLISRPRNASDIQFQDWRRLGSEGLVIGKVISLGADRYEVRFQLFDIYKEEQLVGRRYQVPAAGLRHLAHQIADLIYETLTGEKGIFTTHIAFVTVSRAAHGAKQYSLQVADVDGHNPHTILRSKEPILSPAWSPDGTQLAYVSFERRRSEVFVQELRTGQRQSVASFSGINSAPDWSPDGGKLALVLSKEGNPEIYIRDLATGRLTRLTHNTAIDTEPAWAPDGGSIVFTSDRGGRPQLYQIPVSGGRAQRLTFDGAYNASASFAPDGRRLALIHGDKGQFHIAVLNLQSKELQVLTETRMDESPSFAPNGRMILYATSSPQGGVLAAVSTDGRVRQRLAQQGDEVREPAWSP.

An N-terminal signal peptide occupies residues methionine 1 to alanine 28.

The protein belongs to the TolB family. In terms of assembly, the Tol-Pal system is composed of five core proteins: the inner membrane proteins TolA, TolQ and TolR, the periplasmic protein TolB and the outer membrane protein Pal. They form a network linking the inner and outer membranes and the peptidoglycan layer.

It localises to the periplasm. Its function is as follows. Part of the Tol-Pal system, which plays a role in outer membrane invagination during cell division and is important for maintaining outer membrane integrity. This Nitrosococcus oceani (strain ATCC 19707 / BCRC 17464 / JCM 30415 / NCIMB 11848 / C-107) protein is Tol-Pal system protein TolB.